The primary structure comprises 653 residues: Probable potassium transport system protein Kup (653 aa).

12 helical membrane passes run 37–57, 79–99, 134–154, 168–188, 196–216, 243–263, 278–298, 320–340, 368–388, 397–417, 426–446, and 450–470; these read ALLALGALGIVYGDIGTSPLY, VLSLIFWSLIIVVSVKYLLLV, ITLGIFGAALLYGDGIITPAI, AVFDPYVIPIALVILVALFLV, IGAVFGPVMCIWFLTLAGLGV, LHGFLVLGGVFLVVTGCEALY, WFSMVLPALMLNYLGQGALLL, LVALATVAGVIASQALIAGVF, IYLPGLNWALLVGVVALVLGF, AYGIAVSTAMVITTLMAYVVA, WVAIPVVGLFLSVELAFFGAN, and VADGGWFPLLMAVVVFTLMTT.

It belongs to the HAK/KUP transporter (TC 2.A.72) family.

It localises to the cell inner membrane. The catalysed reaction is K(+)(in) + H(+)(in) = K(+)(out) + H(+)(out). Functionally, transport of potassium into the cell. Likely operates as a K(+):H(+) symporter. The chain is Probable potassium transport system protein Kup from Myxococcus xanthus (strain DK1622).